Consider the following 132-residue polypeptide: Small ribosomal subunit protein uS8 (132 aa).

It belongs to the universal ribosomal protein uS8 family. As to quaternary structure, part of the 30S ribosomal subunit. Contacts proteins S5 and S12.

One of the primary rRNA binding proteins, it binds directly to 16S rRNA central domain where it helps coordinate assembly of the platform of the 30S subunit. The sequence is that of Small ribosomal subunit protein uS8 from Mycolicibacterium vanbaalenii (strain DSM 7251 / JCM 13017 / BCRC 16820 / KCTC 9966 / NRRL B-24157 / PYR-1) (Mycobacterium vanbaalenii).